The primary structure comprises 550 residues: Eukaryotic translation initiation factor 3 subunit D-2 (550 aa).

The interval 97 to 126 is disordered; the sequence is RGRGFRPSVHNNPRNVRNQRGRKGNAMGNI. The interval 287-301 is RNA gate; sequence KFDMLTVNETSQEPP. Residues 530–550 form a disordered region; the sequence is SDVSEEEESSEDKPFGLSMNN.

This sequence belongs to the eIF-3 subunit D family. In terms of assembly, component of the eukaryotic translation initiation factor 3 (eIF-3) complex. The eIF-3 complex interacts with pix.

The protein localises to the cytoplasm. In terms of biological role, mRNA cap-binding component of the eukaryotic translation initiation factor 3 (eIF-3) complex, which is involved in protein synthesis of a specialized repertoire of mRNAs and, together with other initiation factors, stimulates binding of mRNA and methionyl-tRNAi to the 40S ribosome. The eIF-3 complex specifically targets and initiates translation of a subset of mRNAs involved in cell proliferation. In the eIF-3 complex, eif3d specifically recognizes and binds the 7-methylguanosine cap of a subset of mRNAs. In Drosophila willistoni (Fruit fly), this protein is Eukaryotic translation initiation factor 3 subunit D-2.